Here is a 607-residue protein sequence, read N- to C-terminus: Pyruvate decarboxylase 1 (607 aa).

2 residues coordinate substrate: D69 and H156. Residues 434–516 (DSWFNCQKLK…FLINNGGYTI (83 aa)) form a thiamine pyrophosphate binding region. Mg(2+)-binding residues include D484, N511, and G513. E517 contributes to the substrate binding site.

It belongs to the TPP enzyme family. Homotetramer. Requires a metal cation as cofactor. The cofactor is thiamine diphosphate. Highly expressed in seeds, and at lower levels in roots and siliques.

It carries out the reaction a 2-oxocarboxylate + H(+) = an aldehyde + CO2. Its function is as follows. May play a role in ethanolic fermentation during anoxia. The polypeptide is Pyruvate decarboxylase 1 (PDC1) (Arabidopsis thaliana (Mouse-ear cress)).